Consider the following 128-residue polypeptide: Glycine cleavage system H protein (128 aa).

A Lipoyl-binding domain is found at 23 to 105; sequence KVRIGITDFA…YEKAWMIVVE (83 aa). Lysine 64 carries the N6-lipoyllysine modification.

This sequence belongs to the GcvH family. The glycine cleavage system is composed of four proteins: P, T, L and H. (R)-lipoate is required as a cofactor.

In terms of biological role, the glycine cleavage system catalyzes the degradation of glycine. The H protein shuttles the methylamine group of glycine from the P protein to the T protein. Functionally, is also involved in protein lipoylation via its role as an octanoyl/lipoyl carrier protein intermediate. This Halalkalibacterium halodurans (strain ATCC BAA-125 / DSM 18197 / FERM 7344 / JCM 9153 / C-125) (Bacillus halodurans) protein is Glycine cleavage system H protein.